Consider the following 336-residue polypeptide: UDP-3-O-acylglucosamine N-acyltransferase (336 aa).

His-233 serves as the catalytic Proton acceptor.

The protein belongs to the transferase hexapeptide repeat family. LpxD subfamily. As to quaternary structure, homotrimer.

The catalysed reaction is a UDP-3-O-[(3R)-3-hydroxyacyl]-alpha-D-glucosamine + a (3R)-hydroxyacyl-[ACP] = a UDP-2-N,3-O-bis[(3R)-3-hydroxyacyl]-alpha-D-glucosamine + holo-[ACP] + H(+). Its pathway is bacterial outer membrane biogenesis; LPS lipid A biosynthesis. In terms of biological role, catalyzes the N-acylation of UDP-3-O-acylglucosamine using 3-hydroxyacyl-ACP as the acyl donor. Is involved in the biosynthesis of lipid A, a phosphorylated glycolipid that anchors the lipopolysaccharide to the outer membrane of the cell. This chain is UDP-3-O-acylglucosamine N-acyltransferase, found in Helicobacter pylori (strain J99 / ATCC 700824) (Campylobacter pylori J99).